The primary structure comprises 1323 residues: Regulatory protein ADR1 (1323 aa).

Position 54 is a phosphoserine (serine 54). 2 C2H2-type zinc fingers span residues 104–126 (FVCE…YRSH) and 132–155 (YPCG…QKIH). A disordered region spans residues 175–216 (KARKNSASSVKFQTPTYGTPDNGNFLNRTTANTRRKASPEAN). Polar residues predominate over residues 179–206 (NSASSVKFQTPTYGTPDNGNFLNRTTAN). Phosphothreonine occurs at positions 188 and 193. The residue at position 230 (serine 230) is a Phosphoserine; by PKA; in vitro. Serine 258 is subject to Phosphoserine. Threonine 259 bears the Phosphothreonine mark. Serine 299, serine 323, and serine 325 each carry phosphoserine. Position 327 is a phosphothreonine (threonine 327).

Phosphorylation at Ser-230 by cAMP-dependent protein kinase A does not affect DNA binding but appears to prevent transcription of ADH2 during glucose repression.

The protein localises to the nucleus. In terms of biological role, required for transcriptional activation of glucose-repressible alcohol dehydrogenase (ADH2). The polypeptide is Regulatory protein ADR1 (ADR1) (Saccharomyces cerevisiae (strain ATCC 204508 / S288c) (Baker's yeast)).